Consider the following 1033-residue polypeptide: Tyrosine-protein kinase-like otk (1033 aa).

An N-terminal signal peptide occupies residues 1–22 (MTARMISICGLVMALMMASVLA). The Extracellular portion of the chain corresponds to 23–581 (SSSRFQRVPQ…GGDGFLVTRA (559 aa)). 5 consecutive Ig-like C2-type domains span residues 25-114 (SRFQ…AKLS), 113-199 (LSVI…RVMS), 251-365 (PEDL…APIN), 368-463 (PGIL…VAIN), and 468-558 (PKFS…VQLV). Residue N39 is glycosylated (N-linked (GlcNAc...) asparagine). 4 disulfides stabilise this stretch: C46-C95, C137-C188, C276-C354, and C399-C447. Residues N336, N417, N429, N444, N457, N512, and N524 are each glycosylated (N-linked (GlcNAc...) asparagine). C490 and C542 are oxidised to a cystine. A helical membrane pass occupies residues 582-602 (VLITMTVALAYIVLVVGLMLW). Residues 603-1033 (CRYRRQARKA…LSKAMQSAEK (431 aa)) are Cytoplasmic-facing. Disordered regions lie at residues 617–679 (LSTK…KKSA) and 718–760 (SPSD…KTSM). The segment covering 655–673 (KSSGDAQKSDDTACSQQSR) has biased composition (polar residues). At S678 the chain carries Phosphoserine. A Protein kinase; inactive domain is found at 692–1028 (LSELIQIGRG…QLGAALSKAM (337 aa)). Positions 720-731 (SDKDADTEKQHS) are enriched in basic and acidic residues.

It belongs to the protein kinase superfamily. Tyr protein kinase family. Insulin receptor subfamily. As to quaternary structure, interacts with plexA; component of a receptor complex that mediates the repulsive signaling in response to Semaphorin ligands. Dynamically expressed during embryogenesis in several areas of the developing nervous system, including neurons and fasciculating axons. Expression in stage 7 embryos is seen in the anterior midgut primordia, cephalic furrow and along the germinal band. At stage 11, expression is in 15 stripes over the trunk region, and in the anterior and posterior midgut primordia. Stage 12 shows expression in the developing nervous system, procephalic lobe and maxillar bud. Stage 13 shows expression in the ventral cord, maxillar segment and in three regions of the gut. At stage 16 expression is preferentially detected throughout the nervous system, including the neuromers in the ventral cord and the supraesophageal ganglion (at protein level). In larva, expression is seen in developing R cells and is localized predominantly to R1-R6 growth cones.

The protein resides in the cell membrane. Acts as a calcium-dependent, homophilic cell adhesion molecule that regulates neural recognition during the development of the nervous system. Component of the repulsive Plexin signaling response to regulate motor axon guidance at the embryonic stage. Also component of a receptor complex that is required in the adult visual system to innervate the lamina layer; specific targeting of R1-R6 axons. This Drosophila melanogaster (Fruit fly) protein is Tyrosine-protein kinase-like otk.